The sequence spans 69 residues: uncharacterized protein (69 aa).

Residues 21–64 (LNLLKGGEEKISEVELKLDEMEKKMDSLLVQLEDLHRDNNDLAK) are a coiled coil.

This is an uncharacterized protein from Saccharomyces cerevisiae (strain ATCC 204508 / S288c) (Baker's yeast).